Here is a 103-residue protein sequence, read N- to C-terminus: Histone H4 (103 aa).

Over residues 1–14 (MSGRGKGGKGLGKG) the composition is skewed to gly residues. Positions 1–20 (MSGRGKGGKGLGKGGAKRHR) are disordered. A DNA-binding region spans residues 17 to 21 (KRHRK).

Belongs to the histone H4 family. As to quaternary structure, the nucleosome is a histone octamer containing two molecules each of H2A, H2B, H3 and H4 assembled in one H3-H4 heterotetramer and two H2A-H2B heterodimers. The octamer wraps approximately 147 bp of DNA.

The protein localises to the nucleus. It localises to the chromosome. In terms of biological role, core component of nucleosome. Nucleosomes wrap and compact DNA into chromatin, limiting DNA accessibility to the cellular machineries which require DNA as a template. Histones thereby play a central role in transcription regulation, DNA repair, DNA replication and chromosomal stability. DNA accessibility is regulated via a complex set of post-translational modifications of histones, also called histone code, and nucleosome remodeling. The chain is Histone H4 from Eimeria tenella (Coccidian parasite).